Here is a 348-residue protein sequence, read N- to C-terminus: Protein pelota homolog (348 aa).

The protein belongs to the eukaryotic release factor 1 family. Pelota subfamily. Monomer. Requires a divalent metal cation as cofactor.

It localises to the cytoplasm. In terms of biological role, may function in recognizing stalled ribosomes, interact with stem-loop structures in stalled mRNA molecules, and effect endonucleolytic cleavage of the mRNA. May play a role in the release non-functional ribosomes and degradation of damaged mRNAs. Has endoribonuclease activity. This Methanococcus maripaludis (strain C7 / ATCC BAA-1331) protein is Protein pelota homolog.